The following is a 252-amino-acid chain: UPF0273 protein MK0039 (252 aa).

Residues 4 to 248 enclose the KaiC domain; sequence ERVSTGIPGM…VFVKERGEVR (245 aa). Residue 31-38 participates in ATP binding; that stretch reads GGPGTGKT.

Belongs to the UPF0273 family.

The protein is UPF0273 protein MK0039 of Methanopyrus kandleri (strain AV19 / DSM 6324 / JCM 9639 / NBRC 100938).